Reading from the N-terminus, the 265-residue chain is Hydroxyethylthiazole kinase (265 aa).

Substrate is bound at residue M50. Residues R125 and T171 each coordinate ATP. Residue G198 participates in substrate binding.

Belongs to the Thz kinase family. Mg(2+) is required as a cofactor.

It carries out the reaction 5-(2-hydroxyethyl)-4-methylthiazole + ATP = 4-methyl-5-(2-phosphooxyethyl)-thiazole + ADP + H(+). It participates in cofactor biosynthesis; thiamine diphosphate biosynthesis; 4-methyl-5-(2-phosphoethyl)-thiazole from 5-(2-hydroxyethyl)-4-methylthiazole: step 1/1. Functionally, catalyzes the phosphorylation of the hydroxyl group of 4-methyl-5-beta-hydroxyethylthiazole (THZ). This chain is Hydroxyethylthiazole kinase, found in Salmonella paratyphi B (strain ATCC BAA-1250 / SPB7).